A 1393-amino-acid chain; its full sequence is DNA-directed RNA polymerase subunit beta (1393 aa).

This sequence belongs to the RNA polymerase beta chain family. In terms of assembly, the RNAP catalytic core consists of 2 alpha, 1 beta, 1 beta' and 1 omega subunit. When a sigma factor is associated with the core the holoenzyme is formed, which can initiate transcription.

The catalysed reaction is RNA(n) + a ribonucleoside 5'-triphosphate = RNA(n+1) + diphosphate. Functionally, DNA-dependent RNA polymerase catalyzes the transcription of DNA into RNA using the four ribonucleoside triphosphates as substrates. The chain is DNA-directed RNA polymerase subunit beta from Rhodospirillum rubrum (strain ATCC 11170 / ATH 1.1.1 / DSM 467 / LMG 4362 / NCIMB 8255 / S1).